A 237-amino-acid polypeptide reads, in one-letter code: 2,3-bisphosphoglycerate-dependent phosphoglycerate mutase (237 aa).

Substrate is bound by residues Arg8–Asn15, Thr21–Gly22, Arg60, Glu87–Tyr90, Lys98, Arg114–Arg115, and Gly180–Asn181. His9 acts as the Tele-phosphohistidine intermediate in catalysis. Residue Glu87 is the Proton donor/acceptor of the active site.

It belongs to the phosphoglycerate mutase family. BPG-dependent PGAM subfamily. As to quaternary structure, homodimer.

The enzyme catalyses (2R)-2-phosphoglycerate = (2R)-3-phosphoglycerate. It participates in carbohydrate degradation; glycolysis; pyruvate from D-glyceraldehyde 3-phosphate: step 3/5. Functionally, catalyzes the interconversion of 2-phosphoglycerate and 3-phosphoglycerate. The polypeptide is 2,3-bisphosphoglycerate-dependent phosphoglycerate mutase (Hyphomonas neptunium (strain ATCC 15444)).